The following is a 329-amino-acid chain: Interleukin-12 subunit beta (329 aa).

The N-terminal stretch at 1-22 is a signal peptide; that stretch reads MCHQWLVLSWFSLVLLASPLMA. In terms of domain architecture, Ig-like C2-type spans 29–106; sequence DVYVVELDWY…LSHSHLLLHK (78 aa). A disulfide bridge connects residues Cys50 and Cys90. 3 N-linked (GlcNAc...) asparagine glycosylation sites follow: Asn125, Asn135, and Asn223. The Fibronectin type-III domain maps to 238 to 329; the sequence is PPKNLQLKPL…WSEWASVSCS (92 aa).

This sequence belongs to the IL-12B family. In terms of assembly, heterodimer with IL12A; disulfide-linked. The heterodimer is known as interleukin IL-12. Heterodimer with IL23A; disulfide-linked. The heterodimer is known as interleukin IL-23. Also secreted as a monomer. Interacts with NBR1; this interaction promotes IL-12 secretion.

It is found in the secreted. Its function is as follows. Cytokine that can act as a growth factor for activated T and NK cells, enhance the lytic activity of NK/lymphokine-activated killer cells, and stimulate the production of IFN-gamma by resting PBMC. Associates with IL23A to form the IL-23 interleukin, a heterodimeric cytokine which functions in innate and adaptive immunity. IL-23 may constitute with IL-17 an acute response to infection in peripheral tissues. IL-23 binds to a heterodimeric receptor complex composed of IL12RB1 and IL23R, activates the Jak-Stat signaling cascade, stimulates memory rather than naive T-cells and promotes production of pro-inflammatory cytokines. IL-23 induces autoimmune inflammation and thus may be responsible for autoimmune inflammatory diseases and may be important for tumorigenesis. This chain is Interleukin-12 subunit beta (IL12B), found in Equus caballus (Horse).